Reading from the N-terminus, the 269-residue chain is Hydroxyethylthiazole kinase (269 aa).

Met45 is a binding site for substrate. ATP contacts are provided by Arg121 and Thr167. Gly194 provides a ligand contact to substrate.

Belongs to the Thz kinase family. Mg(2+) serves as cofactor.

It carries out the reaction 5-(2-hydroxyethyl)-4-methylthiazole + ATP = 4-methyl-5-(2-phosphooxyethyl)-thiazole + ADP + H(+). The protein operates within cofactor biosynthesis; thiamine diphosphate biosynthesis; 4-methyl-5-(2-phosphoethyl)-thiazole from 5-(2-hydroxyethyl)-4-methylthiazole: step 1/1. Functionally, catalyzes the phosphorylation of the hydroxyl group of 4-methyl-5-beta-hydroxyethylthiazole (THZ). This Geobacillus sp. (strain WCH70) protein is Hydroxyethylthiazole kinase.